A 96-amino-acid polypeptide reads, in one-letter code: Envelope glycoprotein N (96 aa).

The N-terminal stretch at M1–G21 is a signal peptide. The Virion surface portion of the chain corresponds to R22–Q54. A helical membrane pass occupies residues A55–Y75. Over G76–G96 the chain is Intravirion.

This sequence belongs to the herpesviridae glycoprotein N family. As to quaternary structure, interacts (via N-terminus) with gM (via N-terminus). The gM-gN heterodimer forms the gCII complex.

Its subcellular location is the virion membrane. It localises to the host membrane. The protein localises to the host Golgi apparatus. It is found in the host trans-Golgi network. In terms of biological role, envelope glycoprotein necessary for proper maturation of gM and modulation of its membrane fusion activity. Also plays a critical role in virion morphogenesis. This Bos taurus (Bovine) protein is Envelope glycoprotein N.